Reading from the N-terminus, the 178-residue chain is Cell division protein ZapC (178 aa).

Belongs to the ZapC family. Interacts directly with FtsZ.

Its subcellular location is the cytoplasm. In terms of biological role, contributes to the efficiency of the cell division process by stabilizing the polymeric form of the cell division protein FtsZ. Acts by promoting interactions between FtsZ protofilaments and suppressing the GTPase activity of FtsZ. The polypeptide is Cell division protein ZapC (Aeromonas hydrophila subsp. hydrophila (strain ATCC 7966 / DSM 30187 / BCRC 13018 / CCUG 14551 / JCM 1027 / KCTC 2358 / NCIMB 9240 / NCTC 8049)).